A 243-amino-acid chain; its full sequence is Proteasome subunit alpha (243 aa).

This sequence belongs to the peptidase T1A family. In terms of assembly, the 20S proteasome core is composed of 14 alpha and 14 beta subunits that assemble into four stacked heptameric rings, resulting in a barrel-shaped structure. The two inner rings, each composed of seven catalytic beta subunits, are sandwiched by two outer rings, each composed of seven alpha subunits. The catalytic chamber with the active sites is on the inside of the barrel. Has a gated structure, the ends of the cylinder being occluded by the N-termini of the alpha-subunits. Is capped at one or both ends by the proteasome regulatory ATPase, PAN.

Its subcellular location is the cytoplasm. With respect to regulation, the formation of the proteasomal ATPase PAN-20S proteasome complex, via the docking of the C-termini of PAN into the intersubunit pockets in the alpha-rings, triggers opening of the gate for substrate entry. Interconversion between the open-gate and close-gate conformations leads to a dynamic regulation of the 20S proteasome proteolysis activity. Functionally, component of the proteasome core, a large protease complex with broad specificity involved in protein degradation. This Pyrobaculum aerophilum (strain ATCC 51768 / DSM 7523 / JCM 9630 / CIP 104966 / NBRC 100827 / IM2) protein is Proteasome subunit alpha.